The chain runs to 107 residues: UPF0060 membrane protein RPB_2370 (107 aa).

A run of 4 helical transmembrane segments spans residues 5–25, 31–51, 61–81, and 85–105; these read IIYV…WGWL, VWWL…LTLV, AAYG…VEGV, and RWDV…LWGP.

It belongs to the UPF0060 family.

It is found in the cell inner membrane. This chain is UPF0060 membrane protein RPB_2370, found in Rhodopseudomonas palustris (strain HaA2).